We begin with the raw amino-acid sequence, 514 residues long: ATP synthase subunit alpha (514 aa).

170 to 177 (GDRQIGKS) contributes to the ATP binding site.

The protein belongs to the ATPase alpha/beta chains family. As to quaternary structure, F-type ATPases have 2 components, CF(1) - the catalytic core - and CF(0) - the membrane proton channel. CF(1) has five subunits: alpha(3), beta(3), gamma(1), delta(1), epsilon(1). CF(0) has three main subunits: a(1), b(2) and c(9-12). The alpha and beta chains form an alternating ring which encloses part of the gamma chain. CF(1) is attached to CF(0) by a central stalk formed by the gamma and epsilon chains, while a peripheral stalk is formed by the delta and b chains.

The protein localises to the cell inner membrane. It carries out the reaction ATP + H2O + 4 H(+)(in) = ADP + phosphate + 5 H(+)(out). In terms of biological role, produces ATP from ADP in the presence of a proton gradient across the membrane. The alpha chain is a regulatory subunit. This chain is ATP synthase subunit alpha, found in Chromohalobacter salexigens (strain ATCC BAA-138 / DSM 3043 / CIP 106854 / NCIMB 13768 / 1H11).